A 226-amino-acid polypeptide reads, in one-letter code: Probable chemoreceptor glutamine deamidase CheD (226 aa).

The segment at 207–226 is disordered; it reads PGGMRVERFDTPSRRDPVGA.

The protein belongs to the CheD family.

The enzyme catalyses L-glutaminyl-[protein] + H2O = L-glutamyl-[protein] + NH4(+). Probably deamidates glutamine residues to glutamate on methyl-accepting chemotaxis receptors (MCPs), playing an important role in chemotaxis. This Bordetella bronchiseptica (strain ATCC BAA-588 / NCTC 13252 / RB50) (Alcaligenes bronchisepticus) protein is Probable chemoreceptor glutamine deamidase CheD.